The primary structure comprises 264 residues: tRNA pseudouridine synthase A (264 aa).

Asp51 (nucleophile) is an active-site residue. Tyr109 is a binding site for substrate.

Belongs to the tRNA pseudouridine synthase TruA family. As to quaternary structure, homodimer.

It carries out the reaction uridine(38/39/40) in tRNA = pseudouridine(38/39/40) in tRNA. Functionally, formation of pseudouridine at positions 38, 39 and 40 in the anticodon stem and loop of transfer RNAs. In Aromatoleum aromaticum (strain DSM 19018 / LMG 30748 / EbN1) (Azoarcus sp. (strain EbN1)), this protein is tRNA pseudouridine synthase A.